The primary structure comprises 110 residues: Large ribosomal subunit protein uL22 (110 aa).

It belongs to the universal ribosomal protein uL22 family. As to quaternary structure, part of the 50S ribosomal subunit.

This protein binds specifically to 23S rRNA; its binding is stimulated by other ribosomal proteins, e.g. L4, L17, and L20. It is important during the early stages of 50S assembly. It makes multiple contacts with different domains of the 23S rRNA in the assembled 50S subunit and ribosome. Its function is as follows. The globular domain of the protein is located near the polypeptide exit tunnel on the outside of the subunit, while an extended beta-hairpin is found that lines the wall of the exit tunnel in the center of the 70S ribosome. This chain is Large ribosomal subunit protein uL22, found in Shigella flexneri serotype 5b (strain 8401).